A 239-amino-acid chain; its full sequence is Tumor necrosis factor ligand superfamily member 14 (239 aa).

Topologically, residues 1 to 37 (MESVVQPSVFVVDGQTDIPFRRLEQNHRRRRCGTVQV) are cytoplasmic. Residues 38–58 (SLALVLLLGAGLATQGWFLLR) form a helical; Signal-anchor for type II membrane protein membrane-spanning segment. The Extracellular segment spans residues 59–239 (LHQRLGDIVA…TRSYFGAFMV (181 aa)). Positions 92–239 (PAAHLTGANA…TRSYFGAFMV (148 aa)) constitute a THD domain. N100 carries N-linked (GlcNAc...) asparagine glycosylation. C152 and C187 are joined by a disulfide. N-linked (GlcNAc...) asparagine glycosylation is present at N191.

The protein belongs to the tumor necrosis factor family. In terms of assembly, homotrimer. Interacts with TNFRSF14. Post-translationally, the soluble form derives from the membrane form by proteolytic processing.

It is found in the cell membrane. The protein localises to the secreted. Cytokine that binds to TNFRSF3/LTBR. Binding to the decoy receptor TNFRSF6B modulates its effects. Activates NFKB and stimulates the proliferation of T-cells. Acts as a ligand for TNFRSF14/HVEM. Upon binding to TNFRSF14/HVEM, delivers costimulatory signals to T cells, leading to T cell proliferation and IFNG production. The sequence is that of Tumor necrosis factor ligand superfamily member 14 (Tnfsf14) from Mus musculus (Mouse).